The primary structure comprises 460 residues: UDP-N-acetylmuramoyl-tripeptide--D-alanyl-D-alanine ligase (460 aa).

115–121 is an ATP binding site; it reads GSSGKTS.

This sequence belongs to the MurCDEF family. MurF subfamily.

Its subcellular location is the cytoplasm. The enzyme catalyses D-alanyl-D-alanine + UDP-N-acetyl-alpha-D-muramoyl-L-alanyl-gamma-D-glutamyl-meso-2,6-diaminopimelate + ATP = UDP-N-acetyl-alpha-D-muramoyl-L-alanyl-gamma-D-glutamyl-meso-2,6-diaminopimeloyl-D-alanyl-D-alanine + ADP + phosphate + H(+). It participates in cell wall biogenesis; peptidoglycan biosynthesis. In terms of biological role, involved in cell wall formation. Catalyzes the final step in the synthesis of UDP-N-acetylmuramoyl-pentapeptide, the precursor of murein. This Buchnera aphidicola subsp. Baizongia pistaciae (strain Bp) protein is UDP-N-acetylmuramoyl-tripeptide--D-alanyl-D-alanine ligase.